The primary structure comprises 445 residues: C4-dicarboxylate transport protein (445 aa).

8 helical membrane passes run 24 to 44 (VLYV…WVSP), 62 to 82 (LIKM…IAHI), 105 to 125 (FALI…GLAA), 163 to 183 (GDIL…MALG), 201 to 221 (FGVI…AMAF), 237 to 257 (LVAL…GLIA), 322 to 342 (IYMT…LTFT), and 370 to 390 (AGTL…VFSI).

The protein belongs to the dicarboxylate/amino acid:cation symporter (DAACS) (TC 2.A.23) family.

It is found in the cell inner membrane. In terms of biological role, responsible for the transport of dicarboxylates such as succinate, fumarate, and malate from the periplasm across the membrane. The chain is C4-dicarboxylate transport protein from Rhodopseudomonas palustris (strain BisB5).